The sequence spans 241 residues: Phycocyanobilin:ferredoxin oxidoreductase (241 aa).

This sequence belongs to the HY2 family.

The enzyme catalyses (2R,3Z)-phycocyanobilin + 4 oxidized [2Fe-2S]-[ferredoxin] = biliverdin IXalpha + 4 reduced [2Fe-2S]-[ferredoxin] + 4 H(+). In terms of biological role, catalyzes the four-electron reduction of biliverdin IX-alpha (2-electron reduction at both the A and D rings); the reaction proceeds via an isolatable 2-electron intermediate, 181,182-dihydrobiliverdin. This chain is Phycocyanobilin:ferredoxin oxidoreductase, found in Prochlorococcus marinus (strain MIT 9215).